A 254-amino-acid polypeptide reads, in one-letter code: Alcohol dehydrogenase (254 aa).

10-33 (FVAGLGGIGLDTSRELVKRNLKNL) serves as a coordination point for NAD(+). Ser138 is a substrate binding site. The Proton acceptor role is filled by Tyr151.

The protein belongs to the short-chain dehydrogenases/reductases (SDR) family. As to quaternary structure, homodimer.

The catalysed reaction is a primary alcohol + NAD(+) = an aldehyde + NADH + H(+). It catalyses the reaction a secondary alcohol + NAD(+) = a ketone + NADH + H(+). This is Alcohol dehydrogenase (Adh) from Drosophila persimilis (Fruit fly).